The chain runs to 68 residues: MKDFIMPRTFPCPRCGQPSVWEGNESRPFCSERCKLIDLGAWASEEYKLKTQDAPTSGKGQHSDDYED.

Zn(2+) is bound by residues cysteine 12, cysteine 15, cysteine 30, and cysteine 34. Residues 48-68 (KLKTQDAPTSGKGQHSDDYED) form a disordered region.

This sequence belongs to the DNA gyrase inhibitor YacG family. As to quaternary structure, interacts with GyrB. Zn(2+) serves as cofactor.

In terms of biological role, inhibits all the catalytic activities of DNA gyrase by preventing its interaction with DNA. Acts by binding directly to the C-terminal domain of GyrB, which probably disrupts DNA binding by the gyrase. The polypeptide is DNA gyrase inhibitor YacG (Acinetobacter baylyi (strain ATCC 33305 / BD413 / ADP1)).